A 310-amino-acid polypeptide reads, in one-letter code: tRNA uridine(34) hydroxylase (310 aa).

Residues 124 to 218 (SDPEVLLIDT…YFEEVPQEES (95 aa)) enclose the Rhodanese domain. Cys178 (cysteine persulfide intermediate) is an active-site residue.

The protein belongs to the TrhO family.

It catalyses the reaction uridine(34) in tRNA + AH2 + O2 = 5-hydroxyuridine(34) in tRNA + A + H2O. Its function is as follows. Catalyzes oxygen-dependent 5-hydroxyuridine (ho5U) modification at position 34 in tRNAs. This chain is tRNA uridine(34) hydroxylase, found in Pseudomonas putida (strain ATCC 700007 / DSM 6899 / JCM 31910 / BCRC 17059 / LMG 24140 / F1).